Consider the following 274-residue polypeptide: Octanoyl-[GcvH]:protein N-octanoyltransferase (274 aa).

The BPL/LPL catalytic domain maps to 37–242; that stretch reads QGNDAVVRTW…AMKTLGATLS (206 aa). Catalysis depends on cysteine 141, which acts as the Acyl-thioester intermediate.

The protein belongs to the octanoyltransferase LipL family.

It carries out the reaction N(6)-octanoyl-L-lysyl-[glycine-cleavage complex H protein] + L-lysyl-[lipoyl-carrier protein] = N(6)-octanoyl-L-lysyl-[lipoyl-carrier protein] + L-lysyl-[glycine-cleavage complex H protein]. It functions in the pathway protein modification; protein lipoylation via endogenous pathway; protein N(6)-(lipoyl)lysine from octanoyl-[acyl-carrier-protein]. Its function is as follows. Catalyzes the amidotransfer (transamidation) of the octanoyl moiety from octanoyl-GcvH to the lipoyl domain of the E2 subunit of lipoate-dependent enzymes. This is Octanoyl-[GcvH]:protein N-octanoyltransferase from Macrococcus caseolyticus (strain JCSC5402) (Macrococcoides caseolyticum).